A 204-amino-acid chain; its full sequence is Sperm acrosome developmental regulator (204 aa).

The residue at position 65 (Ser-65) is a Phosphoserine. Residues 172–184 (RRQERRRRHHLRA) show a composition bias toward basic residues. Residues 172-204 (RRQERRRRHHLRAHMGPQPDPAQGLKQDARSPL) form a disordered region.

It is found in the cytoplasmic vesicle. The protein resides in the secretory vesicle. Its subcellular location is the acrosome. Functionally, may play an important role in acrosome formation and nucleus shaping during spermiogenesis. This is Sperm acrosome developmental regulator (SPACDR) from Bos taurus (Bovine).